The primary structure comprises 678 residues: AAC-rich mRNA clone AAC4 protein (678 aa).

A compositionally biased stretch (low complexity) spans 55–73 (NNNNNNNNNNNNNNNNNNN). Residues 55 to 75 (NNNNNNNNNNNNNNNNNNNTS) are disordered. A helical transmembrane segment spans residues 243 to 263 (IIPIYHEIILVLCNWLVVAFY). Residues 318-346 (NNNNNNNNNNNNNNNNNNNNNNNNKTNNN) show a composition bias toward low complexity. The tract at residues 318–347 (NNNNNNNNNNNNNNNNNNNNNNNNKTNNNQ) is disordered.

The protein resides in the membrane. This Dictyostelium discoideum (Social amoeba) protein is AAC-rich mRNA clone AAC4 protein (AAC4).